The following is a 631-amino-acid chain: Dolichyl-diphosphooligosaccharide--protein glycosyltransferase subunit 2 (631 aa).

An N-terminal signal peptide occupies residues 1 to 22 (MASPGASTVFLLALTILAGTQA). The Lumenal segment spans residues 23–540 (LTPTHYLTKP…REPEKRPPTV (518 aa)). N106 carries an N-linked (GlcNAc...) asparagine glycan. K154 is covalently cross-linked (Glycyl lysine isopeptide (Lys-Gly) (interchain with G-Cter in ubiquitin)). A helical membrane pass occupies residues 541–561 (VSNTFTALILSPLLLLFALWI). Residues 562–571 (RIGANVSNFT) are Cytoplasmic-facing. The helical transmembrane segment at 572–592 (FAPSTIIFHLGHAAMLGLMYV) threads the bilayer. The Lumenal portion of the chain corresponds to 593-596 (YWTQ). Residues 597–617 (LNMFQTLKYLAILGSVTFLAG) traverse the membrane as a helical segment. The Cytoplasmic portion of the chain corresponds to 618-631 (NRMLAQQAIKRTAH).

This sequence belongs to the SWP1 family. In terms of assembly, component of the oligosaccharyltransferase (OST) complex. OST exists in two different complex forms which contain common core subunits RPN1, RPN2, OST48, OST4, DAD1 and TMEM258, either STT3A or STT3B as catalytic subunits, and form-specific accessory subunits. STT3A complex assembly occurs through the formation of 3 subcomplexes. Subcomplex 1 contains RPN1 and TMEM258, subcomplex 2 contains the STT3A-specific subunits STT3A, DC2/OSTC, and KCP2 as well as the core subunit OST4, and subcomplex 3 contains RPN2, DAD1, and OST48. The STT3A complex can form stable complexes with the Sec61 complex or with both the Sec61 and TRAP complexes. Interacts with DDI2. Interacts with TMEM35A/NACHO.

Its subcellular location is the endoplasmic reticulum. It localises to the endoplasmic reticulum membrane. It participates in protein modification; protein glycosylation. In terms of biological role, subunit of the oligosaccharyl transferase (OST) complex that catalyzes the initial transfer of a defined glycan (Glc(3)Man(9)GlcNAc(2) in eukaryotes) from the lipid carrier dolichol-pyrophosphate to an asparagine residue within an Asn-X-Ser/Thr consensus motif in nascent polypeptide chains, the first step in protein N-glycosylation. N-glycosylation occurs cotranslationally and the complex associates with the Sec61 complex at the channel-forming translocon complex that mediates protein translocation across the endoplasmic reticulum (ER). All subunits are required for a maximal enzyme activity. The chain is Dolichyl-diphosphooligosaccharide--protein glycosyltransferase subunit 2 from Canis lupus familiaris (Dog).